A 217-amino-acid chain; its full sequence is Growth hormone variant (217 aa).

Positions 1 to 26 (MAAGSRTSLLLAFGLLCLSWLQEGSA) are cleaved as a signal peptide. Intrachain disulfides connect C79/C191 and C208/C215. S132 is modified (phosphoserine). A glycan (N-linked (GlcNAc...) asparagine) is linked at N166. S176 carries the post-translational modification Phosphoserine.

Belongs to the somatotropin/prolactin family. Monomer, dimer, trimer, tetramer and pentamer, disulfide-linked or non-covalently associated, in homomeric and heteromeric combinations. Can also form a complex either with GHBP or with the alpha2-macroglobulin complex. As to expression, expressed in the placenta.

It is found in the secreted. Its function is as follows. Plays an important role in growth control. Its major role in stimulating body growth is to stimulate the liver and other tissues to secrete IGF1. It stimulates both the differentiation and proliferation of myoblasts. It also stimulates amino acid uptake and protein synthesis in muscle and other tissues. The sequence is that of Growth hormone variant (GH2) from Homo sapiens (Human).